The primary structure comprises 147 residues: Protein SprT-like (147 aa).

A SprT-like domain is found at 5–142 (DYVNEVSLED…SFCRGHLKEI (138 aa)). Position 64 (His64) interacts with Zn(2+). The active site involves Glu65. A Zn(2+)-binding site is contributed by His68.

Belongs to the SprT family. Zn(2+) is required as a cofactor.

The protein resides in the cytoplasm. The sequence is that of Protein SprT-like from Streptococcus uberis (strain ATCC BAA-854 / 0140J).